Here is a 491-residue protein sequence, read N- to C-terminus: MSFKNNLKLLLSTQNVLIYILNSEEERLEYKIHLMIRQNIKKTIYCWNFIDGYYNNPNYLNKAIRNPLQAIEFIEQLNFPTSTIFFLKDFHVFINDISVIRKIKNLSRFLKQANSSIIISASEMQVPSLLKDFITVLEFPLPNYEEINLELHRLFKIMNVDSSIYSEYFHDLTLAYRGFSIEKIRISIAKLLTSNLSSTHLIKNILYEKRQLIEQTDVLEFYAVDYSFDNVGGLNVLKDWLNKRSKAFSKQAKNYGLTVPKGILLIGIQGTGKSLIAKAISGQWNLPLLKLDMGKIFASLVGQSEERMRHMIKTAEQSSPCILWIDEIDKCFTRLNNYTDSGTNGRVLSTMLTWLSEKKKPVFVIATANQVLSLPSELLRKGRFDEIFFLNLPSLEEREKIFQIHLMKFRPLSWRKYDIKYLSKLTDQFSGAEIEQAIIEAMYNAFYEKREFSTQDIINAINNFVPLAFTDTCNISAIQDWAISGKIRMAS.

Residue 267–274 (GIQGTGKS) coordinates ATP.

The protein belongs to the AAA ATPase family. Highly divergent.

Its subcellular location is the plastid. The protein localises to the chloroplast. This is an uncharacterized protein from Gracilaria tenuistipitata var. liui (Red alga).